The primary structure comprises 76 residues: U14-hexatoxin-Hi1a (76 aa).

A signal peptide spans Met-1–Ala-18. 3 cysteine pairs are disulfide-bonded: Cys-21-Cys-34, Cys-27-Cys-39, and Cys-33-Cys-61.

Expressed by the venom gland.

It localises to the secreted. In terms of biological role, probable ion channel inhibitor. The protein is U14-hexatoxin-Hi1a of Hadronyche infensa (Fraser island funnel-web spider).